The chain runs to 213 residues: Glutathione S-transferase DHAR1, mitochondrial (213 aa).

Glutathione contacts are provided by Lys8 and Asp19. L-ascorbate is bound by residues Lys8 and Asp19. Positions 10–83 constitute a GST N-terminal domain; that stretch reads AVGAPDHLGD…DVIVGILEEK (74 aa). The active-site Nucleophile is Cys20. The residue at position 20 (Cys20) is an S-glutathionyl cysteine. The short motif at 20 to 25 is the Glutathione-binding element; it reads CPFSQR. Glutathione-binding residues include Lys47, Val60, and Ser73. One can recognise a GST C-terminal domain in the interval 84–213; it reads YPDPPLKTPA…ISGWAPKVNP (130 aa). A Copper-binding motif is present at residues 133 to 137; sequence HLKSH. Glutathione is bound by residues His160 and Trp207. L-ascorbate is bound at residue Lys210.

It belongs to the GST superfamily. DHAR family. In terms of assembly, monomer. Interacts with copper (Cu). In terms of processing, spontaneous S-glutathionylation in the presence of oxidized glutathione (GSSG). As to expression, expressed at least in roots and leaves.

The protein resides in the mitochondrion. It is found in the cytoplasm. Its subcellular location is the cytosol. The protein localises to the peroxisome. It localises to the membrane. It carries out the reaction RX + glutathione = an S-substituted glutathione + a halide anion + H(+). The enzyme catalyses L-dehydroascorbate + 2 glutathione = glutathione disulfide + L-ascorbate. Its function is as follows. Displays a dual function. As a soluble protein, exhibits glutathione-dependent thiol transferase and dehydroascorbate (DHA) reductase activities. Key component of the ascorbate recycling system. Involved in the redox homeostasis, especially in scavenging of ROS under oxidative stresses, subsequently to biotic or abiotic inducers. As a peripheral membrane protein, could also function as voltage-gated ion channel. The protein is Glutathione S-transferase DHAR1, mitochondrial of Arabidopsis thaliana (Mouse-ear cress).